The primary structure comprises 282 residues: DegV domain-containing protein SpyM3_0586 (282 aa).

The DegV domain occupies 3-280; it reads LAVITDSTAT…EGAIAFGVTP (278 aa). Positions 61 and 94 each coordinate hexadecanoate.

In terms of biological role, may bind long-chain fatty acids, such as palmitate, and may play a role in lipid transport or fatty acid metabolism. The polypeptide is DegV domain-containing protein SpyM3_0586 (Streptococcus pyogenes serotype M3 (strain ATCC BAA-595 / MGAS315)).